Reading from the N-terminus, the 308-residue chain is Protein UL135 (308 aa).

An N-terminal signal peptide occupies residues 1 to 22; the sequence is MVWLWLGVGLLGGTGLASLVLA. The disordered stretch occupies residues 105-274; that stretch reads KPEFPPARFE…TEPTTLPIVS (170 aa). The segment covering 126–145 has biased composition (low complexity); it reads SIGRSPSHCSSSSSLSSSAS. Pro residues-rich tracts occupy residues 152–163 and 219–238; these read QPPPSWKPPPPP and PVTPRPFPKTPTPQKPPRNP.

Belongs to the HCMV UL135 family. Interacts with host components of the WAVE2 complex ABI1, NAP1 and WAVE2. Also interacts with host ABI2 and TLN1.

The protein resides in the host cell membrane. It localises to the host Golgi apparatus. In terms of biological role, remodels the host actin cytoskeleton in order to impair immune recognition of infected cells. Mechanistically, interacts with members of the host WAVE2 complex and redirects the complex to the plasma membrane. In turn, the efficiency of immune synapse formation is greatly reduced. This chain is Protein UL135 (UL135), found in Human cytomegalovirus (strain Merlin) (HHV-5).